The primary structure comprises 162 residues: Gas vesicle protein I (162 aa).

The segment at 1-162 is disordered; the sequence is MTGKQHQKHE…AERQRGGADE (162 aa). 2 stretches are compositionally biased toward basic and acidic residues: residues 22 to 37 and 47 to 64; these read INRDKARSKLLRQREK and RQSEVRRGNQSKAQHDTQ. Polar residues-rich tracts occupy residues 65 to 74 and 81 to 110; these read SETQRGTQSK and TGGTKNPTAHSTLPPQKTNAENAVRNSHST. 2 stretches are compositionally biased toward basic and acidic residues: residues 122–142 and 151–162; these read ARERLYGLRLHRETTASEDKS and PKAERQRGGADE.

The protein belongs to the gas vesicle GvpI family. As to quaternary structure, gvpF to GvpM interact with each other in vitro, and may form multi-subunit complex(es). Interacts with GvpC and GvpO.

The protein resides in the gas vesicle. Functionally, proteins GvpF to GvpM might be involved in nucleating gas vesicle formation. A minor component of the gas vesicle. Gas vesicles are hollow, gas filled proteinaceous nanostructures found in some microorganisms. They allow positioning of halobacteria at the optimal depth for growth in the poorly aerated, shallow brine pools of their habitat. Its function is as follows. Expression of a 9.5 kb mc-vac DNA fragment containing 2 divergently transcribed regions (gvpD-gvpE-gvpF-gvpG-gvpH-gvpI-gvpJ-gvpK-gvpL-gvpM and gvpA-gvpC-gvpN-gvpO) allows H.volcanii to produce gas vesicles. The protein is Gas vesicle protein I of Haloferax mediterranei (strain ATCC 33500 / DSM 1411 / JCM 8866 / NBRC 14739 / NCIMB 2177 / R-4) (Halobacterium mediterranei).